Consider the following 348-residue polypeptide: MAKQKLTQNQKRRIHSNNAKALDRHRRQTKKQIDWQEDMLGETQDGVVVTRYSMHADVENAQGEVFRCNLRRTLAGVVVGDLVIWRQGHEKLQGISGVIEAVKPRKNELSRPDYYDGLKVMASNIDRIIIVSAVLPALSLNIIDRYLVICETANIPPVIVLNKIDLLSAEARQEAEQQLKIYRDIGYRTLMISAETGENMEKLTALLSQGTSIFVGQSGVGKSSLVNQIMPEVNAQTAEISENSGLGQHTTTSSRLYHLPQGGDLIDSPGIREFGLWHLDADQITKGYREFRHFLGACKFRDCKHLNDPQCALREAVEQGKIHPVRFDNYHRLISSKDEAKSQRHFTM.

The tract at residues 1 to 32 (MAKQKLTQNQKRRIHSNNAKALDRHRRQTKKQ) is disordered. One can recognise a CP-type G domain in the interval 106 to 274 (KNELSRPDYY…LIDSPGIREF (169 aa)). Residues 162-165 (NKID) and 216-224 (GQSGVGKSS) contribute to the GTP site. Residues C298, C303, H305, and C311 each coordinate Zn(2+).

Belongs to the TRAFAC class YlqF/YawG GTPase family. RsgA subfamily. In terms of assembly, monomer. Associates with 30S ribosomal subunit, binds 16S rRNA. Zn(2+) serves as cofactor.

The protein localises to the cytoplasm. One of several proteins that assist in the late maturation steps of the functional core of the 30S ribosomal subunit. Helps release RbfA from mature subunits. May play a role in the assembly of ribosomal proteins into the subunit. Circularly permuted GTPase that catalyzes slow GTP hydrolysis, GTPase activity is stimulated by the 30S ribosomal subunit. The chain is Small ribosomal subunit biogenesis GTPase RsgA from Actinobacillus succinogenes (strain ATCC 55618 / DSM 22257 / CCUG 43843 / 130Z).